The chain runs to 101 residues: Urease subunit beta (101 aa).

It belongs to the urease beta subunit family. In terms of assembly, heterotrimer of UreA (gamma), UreB (beta) and UreC (alpha) subunits. Three heterotrimers associate to form the active enzyme.

It is found in the cytoplasm. The catalysed reaction is urea + 2 H2O + H(+) = hydrogencarbonate + 2 NH4(+). Its pathway is nitrogen metabolism; urea degradation; CO(2) and NH(3) from urea (urease route): step 1/1. The protein is Urease subunit beta of Burkholderia orbicola (strain AU 1054).